Reading from the N-terminus, the 185-residue chain is Ribosome-recycling factor (185 aa).

The protein belongs to the RRF family.

It localises to the cytoplasm. In terms of biological role, responsible for the release of ribosomes from messenger RNA at the termination of protein biosynthesis. May increase the efficiency of translation by recycling ribosomes from one round of translation to another. The sequence is that of Ribosome-recycling factor from Salmonella paratyphi A (strain ATCC 9150 / SARB42).